The chain runs to 67 residues: Large ribosomal subunit protein uL30 (67 aa).

The protein belongs to the universal ribosomal protein uL30 family. In terms of assembly, part of the 50S ribosomal subunit.

The chain is Large ribosomal subunit protein uL30 from Thermotoga neapolitana (strain ATCC 49049 / DSM 4359 / NBRC 107923 / NS-E).